A 199-amino-acid polypeptide reads, in one-letter code: FMN-dependent NADH:quinone oxidoreductase (199 aa).

FMN contacts are provided by residues 17–19 (SNS) and 87–90 (MYNF).

Belongs to the azoreductase type 1 family. In terms of assembly, homodimer. FMN is required as a cofactor.

It carries out the reaction 2 a quinone + NADH + H(+) = 2 a 1,4-benzosemiquinone + NAD(+). It catalyses the reaction N,N-dimethyl-1,4-phenylenediamine + anthranilate + 2 NAD(+) = 2-(4-dimethylaminophenyl)diazenylbenzoate + 2 NADH + 2 H(+). In terms of biological role, quinone reductase that provides resistance to thiol-specific stress caused by electrophilic quinones. Its function is as follows. Also exhibits azoreductase activity. Catalyzes the reductive cleavage of the azo bond in aromatic azo compounds to the corresponding amines. The chain is FMN-dependent NADH:quinone oxidoreductase from Mycoplasma mycoides subsp. mycoides SC (strain CCUG 32753 / NCTC 10114 / PG1).